The chain runs to 240 residues: Biosynthetic peptidoglycan transglycosylase (240 aa).

The helical transmembrane segment at 16–36 (VLMALLCLFLIYELAMFSMVV) threads the bilayer.

Belongs to the glycosyltransferase 51 family.

It localises to the cell inner membrane. The catalysed reaction is [GlcNAc-(1-&gt;4)-Mur2Ac(oyl-L-Ala-gamma-D-Glu-L-Lys-D-Ala-D-Ala)](n)-di-trans,octa-cis-undecaprenyl diphosphate + beta-D-GlcNAc-(1-&gt;4)-Mur2Ac(oyl-L-Ala-gamma-D-Glu-L-Lys-D-Ala-D-Ala)-di-trans,octa-cis-undecaprenyl diphosphate = [GlcNAc-(1-&gt;4)-Mur2Ac(oyl-L-Ala-gamma-D-Glu-L-Lys-D-Ala-D-Ala)](n+1)-di-trans,octa-cis-undecaprenyl diphosphate + di-trans,octa-cis-undecaprenyl diphosphate + H(+). It participates in cell wall biogenesis; peptidoglycan biosynthesis. In terms of biological role, peptidoglycan polymerase that catalyzes glycan chain elongation from lipid-linked precursors. The protein is Biosynthetic peptidoglycan transglycosylase of Bordetella avium (strain 197N).